Here is a 510-residue protein sequence, read N- to C-terminus: Probable mannosyl-oligosaccharide alpha-1,2-mannosidase 1B (510 aa).

An N-terminal signal peptide occupies residues 1–21 (MHFSSLSLPLTALSLVTPSLA). Asn-35, Asn-95, Asn-182, and Asn-249 each carry an N-linked (GlcNAc...) asparagine glycan. The cysteines at positions 332 and 361 are disulfide-linked. Asn-366 carries an N-linked (GlcNAc...) asparagine glycan. Catalysis depends on Glu-375, which acts as the Proton donor. Thr-501 contributes to the Ca(2+) binding site.

The protein belongs to the glycosyl hydrolase 47 family. In terms of assembly, monomer. It depends on Ca(2+) as a cofactor. The cofactor is Mg(2+).

The protein localises to the cytoplasmic vesicle lumen. The enzyme catalyses N(4)-(alpha-D-Man-(1-&gt;2)-alpha-D-Man-(1-&gt;2)-alpha-D-Man-(1-&gt;3)-[alpha-D-Man-(1-&gt;2)-alpha-D-Man-(1-&gt;3)-[alpha-D-Man-(1-&gt;2)-alpha-D-Man-(1-&gt;6)]-alpha-D-Man-(1-&gt;6)]-beta-D-Man-(1-&gt;4)-beta-D-GlcNAc-(1-&gt;4)-beta-D-GlcNAc)-L-asparaginyl-[protein] (N-glucan mannose isomer 9A1,2,3B1,2,3) + 4 H2O = N(4)-(alpha-D-Man-(1-&gt;3)-[alpha-D-Man-(1-&gt;3)-[alpha-D-Man-(1-&gt;6)]-alpha-D-Man-(1-&gt;6)]-beta-D-Man-(1-&gt;4)-beta-D-GlcNAc-(1-&gt;4)-beta-D-GlcNAc)-L-asparaginyl-[protein] (N-glucan mannose isomer 5A1,2) + 4 beta-D-mannose. It carries out the reaction N(4)-(alpha-D-Man-(1-&gt;2)-alpha-D-Man-(1-&gt;2)-alpha-D-Man-(1-&gt;3)-[alpha-D-Man-(1-&gt;3)-[alpha-D-Man-(1-&gt;2)-alpha-D-Man-(1-&gt;6)]-alpha-D-Man-(1-&gt;6)]-beta-D-Man-(1-&gt;4)-beta-D-GlcNAc-(1-&gt;4)-beta-D-GlcNAc)-L-asparaginyl-[protein] (N-glucan mannose isomer 8A1,2,3B1,3) + 3 H2O = N(4)-(alpha-D-Man-(1-&gt;3)-[alpha-D-Man-(1-&gt;3)-[alpha-D-Man-(1-&gt;6)]-alpha-D-Man-(1-&gt;6)]-beta-D-Man-(1-&gt;4)-beta-D-GlcNAc-(1-&gt;4)-beta-D-GlcNAc)-L-asparaginyl-[protein] (N-glucan mannose isomer 5A1,2) + 3 beta-D-mannose. The protein operates within protein modification; protein glycosylation. Functionally, involved in the maturation of Asn-linked oligosaccharides. Progressively trims alpha-1,2-linked mannose residues from Man(9)GlcNAc(2) to produce Man(5)GlcNAc(2). The polypeptide is Probable mannosyl-oligosaccharide alpha-1,2-mannosidase 1B (mns1B) (Aspergillus flavus (strain ATCC 200026 / FGSC A1120 / IAM 13836 / NRRL 3357 / JCM 12722 / SRRC 167)).